The chain runs to 50 residues: uncharacterized protein (50 aa).

The tract at residues 1–50 (MKTGFWQQVLPKRAGRRKEHPVQYMPHKKEENATGLMNPSLHTSHSAILK) is disordered. The segment covering 35–50 (GLMNPSLHTSHSAILK) has biased composition (polar residues).

This is an uncharacterized protein from Treponema pallidum (strain Nichols).